The primary structure comprises 278 residues: Soluble NSF attachment protein homolog FPV011 (278 aa).

This sequence belongs to the SNAP family.

The protein is Soluble NSF attachment protein homolog FPV011 of Fowlpox virus (strain NVSL) (FPV).